Consider the following 102-residue polypeptide: MAKGQSLQDPFLNALRRERVPVSIYLVNGIKLQGQIESFDQFVILLKNTVSQMVYKHAISTVVPSRPVSHHSNNAGGGASNNYHHGSNVQGSTAQQDSEETE.

One can recognise a Sm domain in the interval 9–68; that stretch reads DPFLNALRRERVPVSIYLVNGIKLQGQIESFDQFVILLKNTVSQMVYKHAISTVVPSRPV. Positions 63–102 are disordered; it reads VPSRPVSHHSNNAGGGASNNYHHGSNVQGSTAQQDSEETE. Low complexity predominate over residues 70–88; the sequence is HHSNNAGGGASNNYHHGSN.

The protein belongs to the Hfq family. In terms of assembly, homohexamer.

Its function is as follows. RNA chaperone that binds small regulatory RNA (sRNAs) and mRNAs to facilitate mRNA translational regulation in response to envelope stress, environmental stress and changes in metabolite concentrations. Also binds with high specificity to tRNAs. This Salmonella choleraesuis (strain SC-B67) protein is RNA-binding protein Hfq.